We begin with the raw amino-acid sequence, 536 residues long: Lysosomal acid glucosylceramidase (536 aa).

The first 39 residues, 1-39 (MEFSSPSREECPKPSGRVSIMAGSLTGLLLLQAVSWASG), serve as a signal peptide directing secretion. 2 disulfides stabilise this stretch: Cys-43/Cys-55 and Cys-57/Cys-62. 3 N-linked (GlcNAc...) asparagine glycosylation sites follow: Asn-58, Asn-98, and Asn-185. The Proton donor role is filled by Glu-274. N-linked (GlcNAc...) asparagine glycosylation occurs at Asn-309. Glu-379 serves as the catalytic Nucleophile. Asn-501 carries N-linked (GlcNAc...) asparagine glycosylation.

Belongs to the glycosyl hydrolase 30 family. As to quaternary structure, interacts with saposin-C. Interacts with SCARB2. Interacts with TCP1. Interacts with GRN; this interaction prevents aggregation of GBA1-SCARB2 complex via interaction with HSPA1A upon stress.

The protein localises to the lysosome membrane. It carries out the reaction a beta-D-glucosyl-(1&lt;-&gt;1')-N-acylsphing-4-enine + H2O = an N-acylsphing-4-enine + D-glucose. The catalysed reaction is a beta-D-galactosyl-(1&lt;-&gt;1')-N-acylsphing-4-enine + H2O = an N-acylsphing-4-enine + D-galactose. The enzyme catalyses cholesteryl 3-beta-D-glucoside + H2O = cholesterol + D-glucose. It catalyses the reaction a beta-D-glucosyl-(1&lt;-&gt;1')-N-acylsphing-4-enine + cholesterol = cholesteryl 3-beta-D-glucoside + an N-acylsphing-4-enine. It carries out the reaction beta-D-glucosyl-N-(9Z-octadecenoyl)-sphing-4E-enine + cholesterol = N-(9Z-octadecenoyl)-sphing-4-enine + cholesteryl 3-beta-D-glucoside. The catalysed reaction is beta-D-glucosyl-N-octanoylsphing-4E-enine + cholesterol = N-octanoylsphing-4-enine + cholesteryl 3-beta-D-glucoside. The enzyme catalyses beta-D-glucosyl-N-dodecanoylsphing-4-enine + cholesterol = N-dodecanoylsphing-4-enine + cholesteryl 3-beta-D-glucoside. It catalyses the reaction beta-D-glucosyl-(1&lt;-&gt;1)-N-octadecanoylsphing-4-enine + cholesterol = N-octadecanoylsphing-4-enine + cholesteryl 3-beta-D-glucoside. It carries out the reaction beta-D-glucosyl-(1&lt;-&gt;1')-N-(15Z-tetracosenoyl)-sphing-4-enine + cholesterol = N-(15Z-tetracosenoyl)-sphing-4-enine + cholesteryl 3-beta-D-glucoside. The catalysed reaction is a beta-D-galactosyl-(1&lt;-&gt;1')-N-acylsphing-4-enine + cholesterol = cholesteryl 3-beta-D-galactoside + an N-acylsphing-4-enine. The enzyme catalyses 1-(beta-D-galactosyl)-N-dodecanoylsphing-4-enine + cholesterol = cholesteryl 3-beta-D-galactoside + N-dodecanoylsphing-4-enine. It catalyses the reaction a beta-D-xylosyl-(1&lt;-&gt;1')-N-acylsphing-4-enine + cholesterol = cholesteryl 3-beta-D-xyloside + an N-acylsphing-4-enine. It carries out the reaction beta-D-xylosyl-(1&lt;-&gt;1')-N-(9Z-octadecenoyl)-sphing-4-enine + cholesterol = cholesteryl 3-beta-D-xyloside + N-(9Z-octadecenoyl)-sphing-4-enine. Its pathway is steroid metabolism; cholesterol metabolism. It participates in sphingolipid metabolism. In terms of biological role, glucosylceramidase that catalyzes, within the lysosomal compartment, the hydrolysis of glucosylceramides/GlcCers (such as beta-D-glucosyl-(1&lt;-&gt;1')-N-acylsphing-4-enine) into free ceramides (such as N-acylsphing-4-enine) and glucose. Plays a central role in the degradation of complex lipids and the turnover of cellular membranes. Through the production of ceramides, participates in the PKC-activated salvage pathway of ceramide formation. Catalyzes the glucosylation of cholesterol, through a transglucosylation reaction where glucose is transferred from GlcCer to cholesterol. GlcCer containing mono-unsaturated fatty acids (such as beta-D-glucosyl-N-(9Z-octadecenoyl)-sphing-4-enine) are preferred as glucose donors for cholesterol glucosylation when compared with GlcCer containing same chain length of saturated fatty acids (such as beta-D-glucosyl-N-octadecanoyl-sphing-4-enine). Under specific conditions, may alternatively catalyze the reverse reaction, transferring glucose from cholesteryl 3-beta-D-glucoside to ceramide. Can also hydrolyze cholesteryl 3-beta-D-glucoside producing glucose and cholesterol. Catalyzes the hydrolysis of galactosylceramides/GalCers (such as beta-D-galactosyl-(1&lt;-&gt;1')-N-acylsphing-4-enine), as well as the transfer of galactose between GalCers and cholesterol in vitro, but with lower activity than with GlcCers. Contrary to GlcCer and GalCer, xylosylceramide/XylCer (such as beta-D-xyosyl-(1&lt;-&gt;1')-N-acylsphing-4-enine) is not a good substrate for hydrolysis, however it is a good xylose donor for transxylosylation activity to form cholesteryl 3-beta-D-xyloside. This Pan troglodytes (Chimpanzee) protein is Lysosomal acid glucosylceramidase (GBA1).